The following is a 500-amino-acid chain: MAQSTKQKVVIVGAGPVGSLAALYAAARGDEVEVYELRGDLRDPSTIPLNFTKSINLALSERGINAMRHSNREEMIHKVLEEAIPMHGRMIHGRDDGKLWEAAQAYDVHGRYINAADRSTLNNALLDELERTPNVNLFFNHKLTGADFRANKAWFERRIPGESTSDRVEIQVNFDYLIGADGAHSASRYHMMKYARVDYQQEYIDTLWCEFRIPPTDDGDFRISPNHLHIWPGKEFMFIALPSADKSFTCTLFAPAGHYARLKSSPQNLLESFDTHFPGVCPELITPKDLQEQFETNPHLPLISIKCKPHHFDSSVVIVGDAAHAVLPFYGQGLNAGLEDIRVLFEIMDKHGVYNPDISPEMRTLSRQAAFQAYTDQRIADAHAINDLSKQNYLEMRWGVKLPLYKLRKSIEETLDRYVPSLGWQTQYARVSFSNQRYSEVIKAVRRQGRLLGFGFISAIVSGVAVVGILAWKRPREASVLSVLKSSARQLGDVWRSKFR.

The protein belongs to the aromatic-ring hydroxylase family. KMO subfamily. Requires FAD as cofactor.

The protein resides in the mitochondrion outer membrane. It catalyses the reaction L-kynurenine + NADPH + O2 + H(+) = 3-hydroxy-L-kynurenine + NADP(+) + H2O. The protein operates within cofactor biosynthesis; NAD(+) biosynthesis; quinolinate from L-kynurenine: step 1/3. Functionally, catalyzes the hydroxylation of L-kynurenine (L-Kyn) to form 3-hydroxy-L-kynurenine (L-3OHKyn). Required for synthesis of quinolinic acid. The sequence is that of Kynurenine 3-monooxygenase (bna4) from Aspergillus terreus (strain NIH 2624 / FGSC A1156).